Reading from the N-terminus, the 353-residue chain is DNA polymerase IV (353 aa).

Residues 6–187 (IIHIDCDCFY…LPVTKLHGVG (182 aa)) form the UmuC domain. The Mg(2+) site is built by Asp10 and Asp105. Residue Glu106 is part of the active site.

Belongs to the DNA polymerase type-Y family. Monomer. Mg(2+) serves as cofactor.

It localises to the cytoplasm. It catalyses the reaction DNA(n) + a 2'-deoxyribonucleoside 5'-triphosphate = DNA(n+1) + diphosphate. In terms of biological role, poorly processive, error-prone DNA polymerase involved in untargeted mutagenesis. Copies undamaged DNA at stalled replication forks, which arise in vivo from mismatched or misaligned primer ends. These misaligned primers can be extended by PolIV. Exhibits no 3'-5' exonuclease (proofreading) activity. May be involved in translesional synthesis, in conjunction with the beta clamp from PolIII. This chain is DNA polymerase IV, found in Pseudomonas syringae pv. tomato (strain ATCC BAA-871 / DC3000).